Consider the following 432-residue polypeptide: MTTSIRQFTSSSSIKGSSGLGGGSSRTSCRLSGGLGAGSCRLGSAGGLGSTLGGSSYSSCYSFGSGGGYGSSFGGVDGLLAGGEKATMQNLNDRLASYLDKVRALEEANTELEVKIRDWYQRQAPGPARDYSQYYRTIEELQNKILTATVDNANILLQIDNARLAADDFRTKFETEQALRLSVEADINGLRRVLDELTLARADLEMQIENLKEELAYLKKNHEEEMNALRGQVGGEINVEMDAAPGVDLSRILNEMRDQYEKMAEKNRKDAEDWFFSKTEELNREVATNSELVQSGKSEISELRRTMQALEIELQSQLSMKASLEGNLAETENRYCVQLSQIQGLIGSVEEQLAQLRCEMEQQNQEYKILLDVKTRLEQEIATYRRLLEGEDAHLTQYKKEPVTTRQVRTIVEEVQDGKVISSREQVHQTTR.

The tract at residues 1-24 (MTTSIRQFTSSSSIKGSSGLGGGS) is disordered. A head region spans residues 1-83 (MTTSIRQFTS…GGVDGLLAGG (83 aa)). Residues serine 12 and serine 13 each carry the phosphoserine modification. Lysine 15 participates in a covalent cross-link: Glycyl lysine isopeptide (Lys-Gly) (interchain with G-Cter in SUMO1); alternate. Lysine 15 participates in a covalent cross-link: Glycyl lysine isopeptide (Lys-Gly) (interchain with G-Cter in SUMO2); alternate. 3 positions are modified to phosphoserine: serine 25, serine 32, and serine 39. Position 44 is a phosphoserine; by RPS6KA1 (serine 44). Positions 84-120 (EKATMQNLNDRLASYLDKVRALEEANTELEVKIRDWY) are coil 1A. The IF rod domain occupies 84–395 (EKATMQNLND…RLLEGEDAHL (312 aa)). The interval 102–116 (VRALEEANTELEVKI) is peptide epitope S1; induces T-cell and keratinocyte proliferation and IFN-gamma production. Phosphothreonine is present on threonine 110. The tract at residues 121–138 (QRQAPGPARDYSQYYRTI) is linker 1. Residues 139 to 230 (EELQNKILTA…NHEEEMNALR (92 aa)) form a coil 1B region. Residues 153-167 (ANILLQIDNARLAAD) are peptide epitope S2; induces T-cell proliferation and IFN-gamma production. Residues 231–250 (GQVGGEINVEMDAAPGVDLS) are linker 12. Positions 251-392 (RILNEMRDQY…TYRRLLEGED (142 aa)) are coil 2. Lysine 278 participates in a covalent cross-link: Glycyl lysine isopeptide (Lys-Gly) (interchain with G-Cter in SUMO2). Threonine 279 is subject to Phosphothreonine. Residue serine 323 is modified to Phosphoserine. The segment at 332 to 346 (ENRYCVQLSQIQGLI) is peptide epitope S4; induces T-cell and keratinocyte proliferation and IFN-gamma production. Residues 393–432 (AHLTQYKKEPVTTRQVRTIVEEVQDGKVISSREQVHQTTR) form a tail region. Residues lysine 399, lysine 400, and lysine 419 each participate in a glycyl lysine isopeptide (Lys-Gly) (interchain with G-Cter in SUMO1); alternate cross-link. Glycyl lysine isopeptide (Lys-Gly) (interchain with G-Cter in SUMO2); alternate cross-links involve residues lysine 399, lysine 400, and lysine 419.

It belongs to the intermediate filament family. In terms of assembly, heterodimer of a type I and a type II keratin. KRT17 associates with KRT6 isomers (KRT6A or KRT6B). Interacts with TRADD and SFN. Phosphorylation at Ser-44 occurs in a growth- and stress-dependent fashion in skin keratinocytes, it has no effect on filament organization. In terms of tissue distribution, expressed in the outer root sheath and medulla region of hair follicle specifically from eyebrow and beard, digital pulp, nail matrix and nail bed epithelium, mucosal stratified squamous epithelia and in basal cells of oral epithelium, palmoplantar epidermis and sweat and mammary glands. Also expressed in myoepithelium of prostate, basal layer of urinary bladder, cambial cells of sebaceous gland and in exocervix (at protein level).

The protein localises to the cytoplasm. Functionally, type I keratin involved in the formation and maintenance of various skin appendages, specifically in determining shape and orientation of hair. Required for the correct growth of hair follicles, in particular for the persistence of the anagen (growth) state. Modulates the function of TNF-alpha in the specific context of hair cycling. Regulates protein synthesis and epithelial cell growth through binding to the adapter protein SFN and by stimulating Akt/mTOR pathway. Involved in tissue repair. May be a marker of basal cell differentiation in complex epithelia and therefore indicative of a certain type of epithelial 'stem cells'. Acts as a promoter of epithelial proliferation by acting a regulator of immune response in skin: promotes Th1/Th17-dominated immune environment contributing to the development of basaloid skin tumors. May act as an autoantigen in the immunopathogenesis of psoriasis, with certain peptide regions being a major target for autoreactive T-cells and hence causing their proliferation. In Homo sapiens (Human), this protein is Keratin, type I cytoskeletal 17 (KRT17).